We begin with the raw amino-acid sequence, 215 residues long: Putative O-methyltransferase MAB_1361c (215 aa).

S-adenosyl-L-methionine is bound by residues Val-42, Glu-64, 66 to 67 (GT), Ser-72, Asp-90, and Val-91. Residue Asp-138 participates in substrate binding.

This sequence belongs to the class I-like SAM-binding methyltransferase superfamily. Cation-dependent O-methyltransferase family.

In Mycobacteroides abscessus (strain ATCC 19977 / DSM 44196 / CCUG 20993 / CIP 104536 / JCM 13569 / NCTC 13031 / TMC 1543 / L948) (Mycobacterium abscessus), this protein is Putative O-methyltransferase MAB_1361c.